Consider the following 179-residue polypeptide: Translation initiation factor IF-3 (179 aa).

It belongs to the IF-3 family. As to quaternary structure, monomer.

It is found in the cytoplasm. IF-3 binds to the 30S ribosomal subunit and shifts the equilibrium between 70S ribosomes and their 50S and 30S subunits in favor of the free subunits, thus enhancing the availability of 30S subunits on which protein synthesis initiation begins. This chain is Translation initiation factor IF-3, found in Buchnera aphidicola subsp. Schizaphis graminum (strain Sg).